Consider the following 105-residue polypeptide: MIKKSRTYYPSFGAYFHLLPAHPNAHSVTLLFGIFRSSPFLLLFLLIHRKVGEGRGSQRMKKKRGRANPSENLRERADPTNGPAENGKKGSVMCGCQLAVAMTTC.

The helical transmembrane segment at 25 to 47 (AHSVTLLFGIFRSSPFLLLFLLI) threads the bilayer. The interval 54-89 (GRGSQRMKKKRGRANPSENLRERADPTNGPAENGKK) is disordered.

It is found in the membrane. This is an uncharacterized protein from Saccharomyces cerevisiae (strain ATCC 204508 / S288c) (Baker's yeast).